The sequence spans 230 residues: Small ribosomal subunit protein uS3 (230 aa).

Positions 39–107 (VRNYLRQKLA…PVHVNIEEIR (69 aa)) constitute a KH type-2 domain. A disordered region spans residues 210-230 (SSKPEHESKQRKAGRRNAAAN).

The protein belongs to the universal ribosomal protein uS3 family. Part of the 30S ribosomal subunit. Forms a tight complex with proteins S10 and S14.

Functionally, binds the lower part of the 30S subunit head. Binds mRNA in the 70S ribosome, positioning it for translation. The sequence is that of Small ribosomal subunit protein uS3 from Neisseria meningitidis serogroup C (strain 053442).